The following is a 144-amino-acid chain: 3-dehydroquinate dehydratase (144 aa).

Tyr-23 functions as the Proton acceptor in the catalytic mechanism. 3 residues coordinate substrate: Asn-74, His-80, and Asp-87. His-100 acts as the Proton donor in catalysis. Residues 101-102 and Arg-111 contribute to the substrate site; that span reads LS.

Belongs to the type-II 3-dehydroquinase family. Homododecamer.

It carries out the reaction 3-dehydroquinate = 3-dehydroshikimate + H2O. Its pathway is metabolic intermediate biosynthesis; chorismate biosynthesis; chorismate from D-erythrose 4-phosphate and phosphoenolpyruvate: step 3/7. In terms of biological role, catalyzes a trans-dehydration via an enolate intermediate. The chain is 3-dehydroquinate dehydratase from Haemophilus ducreyi (strain 35000HP / ATCC 700724).